Reading from the N-terminus, the 200-residue chain is Interferon lambda-2 (200 aa).

A signal peptide spans 1 to 25 (MKLDMTGDCTPVLVLMAAVLTVTGA).

Belongs to the lambda interferon family.

The protein resides in the secreted. In terms of biological role, cytokine with antiviral, antitumour and immunomodulatory activities. Plays a critical role in the antiviral host defense, predominantly in the epithelial tissues. Acts as a ligand for the heterodimeric class II cytokine receptor composed of IL10RB and IFNLR1, and receptor engagement leads to the activation of the JAK/STAT signaling pathway resulting in the expression of IFN-stimulated genes (ISG), which mediate the antiviral state. Has a restricted receptor distribution and therefore restricted targets: is primarily active in epithelial cells and this cell type-selective action is because of the epithelial cell-specific expression of its receptor IFNLR1. Seems not to be essential for early virus-activated host defense in vaginal infection, but plays an important role in Toll-like receptor (TLR)-induced antiviral defense. Plays a significant role in the antiviral immune defense in the intestinal epithelium. Exerts an immunomodulatory effect by up-regulating MHC class I antigen expression. The sequence is that of Interferon lambda-2 (IFNL2) from Homo sapiens (Human).